The following is a 941-amino-acid chain: Glycine dehydrogenase (decarboxylating) (941 aa).

At K692 the chain carries N6-(pyridoxal phosphate)lysine.

Belongs to the GcvP family. As to quaternary structure, the glycine cleavage system is composed of four proteins: P, T, L and H. It depends on pyridoxal 5'-phosphate as a cofactor.

It carries out the reaction N(6)-[(R)-lipoyl]-L-lysyl-[glycine-cleavage complex H protein] + glycine + H(+) = N(6)-[(R)-S(8)-aminomethyldihydrolipoyl]-L-lysyl-[glycine-cleavage complex H protein] + CO2. Functionally, the glycine cleavage system catalyzes the degradation of glycine. The P protein binds the alpha-amino group of glycine through its pyridoxal phosphate cofactor; CO(2) is released and the remaining methylamine moiety is then transferred to the lipoamide cofactor of the H protein. This chain is Glycine dehydrogenase (decarboxylating), found in Mycolicibacterium paratuberculosis (strain ATCC BAA-968 / K-10) (Mycobacterium paratuberculosis).